The sequence spans 729 residues: E3 ubiquitin-protein ligase SH3RF2 (729 aa).

Residues Cys12–Arg53 form an RING-type zinc finger. The disordered stretch occupies residues Ser78 to Asn105. SH3 domains follow at residues Asp125 to Gln184 and Gln187 to Thr252. The segment at Glu258 to Gly297 is disordered. Residues Arg263–Leu285 show a composition bias toward polar residues. The interaction with PAK4 stretch occupies residues Val370–Thr459. The 62-residue stretch at Leu380 to Arg441 folds into the SH3 3 domain. Disordered regions lie at residues Ser497 to Leu526 and Lys610 to Glu677. Residues Arg517 to Leu526 show a composition bias toward polar residues. Residues Lys641–Gln646 form an interaction with PPP1CA region. Ser649 bears the Phosphoserine mark.

This sequence belongs to the SH3RF family. Interacts with FASLG and PPP1CA. Interacts with PAK4 and TNFRSF1A. Interacts with DLK1, MAP3K10/MLK2, MAPK8IP1/JIP1, MAPK8IP2/JIP2 and MAPK8IP3/JIP3. Interacts with RAC1 (both active GTP- or inactive GDP-bound forms). In terms of processing, autoubiquitinated. As to expression, heart (at protein level). Up-regulated in colon cancer tissues as compared to normal colon tissues (at protein level). Testis. In the heart, present in the apex, left atrium, right atrium, left ventricle and right ventricle, but not in the aorta.

It is found in the nucleus. The enzyme catalyses S-ubiquitinyl-[E2 ubiquitin-conjugating enzyme]-L-cysteine + [acceptor protein]-L-lysine = [E2 ubiquitin-conjugating enzyme]-L-cysteine + N(6)-ubiquitinyl-[acceptor protein]-L-lysine.. The protein operates within protein modification; protein ubiquitination. Functionally, has E3 ubiquitin-protein ligase activity. Acts as an anti-apoptotic regulator of the JNK pathway by ubiquitinating and promoting the degradation of SH3RF1, a scaffold protein that is required for pro-apoptotic JNK activation. Facilitates TNF-alpha-mediated recruitment of adapter proteins TRADD and RIPK1 to TNFRSF1A and regulates PAK4 protein stability via inhibition of its ubiquitin-mediated proteasomal degradation. Inhibits PPP1CA phosphatase activity. The polypeptide is E3 ubiquitin-protein ligase SH3RF2 (SH3RF2) (Homo sapiens (Human)).